The primary structure comprises 323 residues: tRNA(Ile)-lysidine synthase (323 aa).

33 to 38 (SGGPDS) is an ATP binding site.

This sequence belongs to the tRNA(Ile)-lysidine synthase family.

The protein localises to the cytoplasm. The catalysed reaction is cytidine(34) in tRNA(Ile2) + L-lysine + ATP = lysidine(34) in tRNA(Ile2) + AMP + diphosphate + H(+). Its function is as follows. Ligates lysine onto the cytidine present at position 34 of the AUA codon-specific tRNA(Ile) that contains the anticodon CAU, in an ATP-dependent manner. Cytidine is converted to lysidine, thus changing the amino acid specificity of the tRNA from methionine to isoleucine. The chain is tRNA(Ile)-lysidine synthase from Mycobacterium bovis (strain ATCC BAA-935 / AF2122/97).